Reading from the N-terminus, the 432-residue chain is Glutamyl-tRNA reductase (432 aa).

Substrate is bound by residues 49–52, serine 101, 106–108, and glutamine 112; these read TCNR and EPQ. Cysteine 50 (nucleophile) is an active-site residue. 181 to 186 lines the NADP(+) pocket; the sequence is GAGETI. The disordered stretch occupies residues 407-432; sequence FPEKPGYQHPPIATPIVRTDDADPAP.

The protein belongs to the glutamyl-tRNA reductase family. As to quaternary structure, homodimer.

The catalysed reaction is (S)-4-amino-5-oxopentanoate + tRNA(Glu) + NADP(+) = L-glutamyl-tRNA(Glu) + NADPH + H(+). It functions in the pathway porphyrin-containing compound metabolism; protoporphyrin-IX biosynthesis; 5-aminolevulinate from L-glutamyl-tRNA(Glu): step 1/2. Functionally, catalyzes the NADPH-dependent reduction of glutamyl-tRNA(Glu) to glutamate 1-semialdehyde (GSA). The polypeptide is Glutamyl-tRNA reductase (Xanthomonas oryzae pv. oryzae (strain PXO99A)).